Reading from the N-terminus, the 52-residue chain is UPF0181 protein NTHI1697 (52 aa).

The protein belongs to the UPF0181 family.

This Haemophilus influenzae (strain 86-028NP) protein is UPF0181 protein NTHI1697.